Reading from the N-terminus, the 177-residue chain is Protein OPG036 (177 aa).

The protein belongs to the poxviridae OPG036 family.

It is found in the host nucleus. Plays a role in the inhibition of host innate immune response. Within the host nucleus, inhibits activation of interferon-beta promoter by inhibiting IRF3 activation. In Homo sapiens (Human), this protein is Protein OPG036 (OPG036).